A 326-amino-acid chain; its full sequence is Transposase InsH for insertion sequence element IS5Y (326 aa).

This sequence belongs to the transposase 11 family.

Its function is as follows. Involved in the transposition of the insertion sequence IS5. The sequence is that of Transposase InsH for insertion sequence element IS5Y (insH5) from Escherichia coli (strain K12).